The primary structure comprises 84 residues: Small ribosomal subunit protein bS16 (84 aa).

It belongs to the bacterial ribosomal protein bS16 family.

The polypeptide is Small ribosomal subunit protein bS16 (Burkholderia multivorans (strain ATCC 17616 / 249)).